We begin with the raw amino-acid sequence, 273 residues long: ATP synthase subunit delta (273 aa).

This sequence belongs to the ATPase delta chain family. As to quaternary structure, F-type ATPases have 2 components, F(1) - the catalytic core - and F(0) - the membrane proton channel. F(1) has five subunits: alpha(3), beta(3), gamma(1), delta(1), epsilon(1). F(0) has three main subunits: a(1), b(2) and c(10-14). The alpha and beta chains form an alternating ring which encloses part of the gamma chain. F(1) is attached to F(0) by a central stalk formed by the gamma and epsilon chains, while a peripheral stalk is formed by the delta and b chains.

Its subcellular location is the cell membrane. F(1)F(0) ATP synthase produces ATP from ADP in the presence of a proton or sodium gradient. F-type ATPases consist of two structural domains, F(1) containing the extramembraneous catalytic core and F(0) containing the membrane proton channel, linked together by a central stalk and a peripheral stalk. During catalysis, ATP synthesis in the catalytic domain of F(1) is coupled via a rotary mechanism of the central stalk subunits to proton translocation. Functionally, this protein is part of the stalk that links CF(0) to CF(1). It either transmits conformational changes from CF(0) to CF(1) or is implicated in proton conduction. The chain is ATP synthase subunit delta from Corynebacterium diphtheriae (strain ATCC 700971 / NCTC 13129 / Biotype gravis).